The following is a 143-amino-acid chain: Larval cuticle protein LCP-17 (143 aa).

Positions 1–16 (MKFLIVLAVAVACASA) are cleaved as a signal peptide. Positions 41–110 (EGHFQFNYET…PQGSHLPTPH (70 aa)) constitute a Chitin-binding type R&amp;R domain.

Functionally, component of the cuticle of the larva of Bombyx mori. This chain is Larval cuticle protein LCP-17 (LCP17), found in Bombyx mori (Silk moth).